Reading from the N-terminus, the 395-residue chain is Syncephapepsin (395 aa).

The signal sequence occupies residues 1 to 19; that stretch reads MKFSLALLATVALATISQA. The propeptide at 20 to 71 is activation peptide; that stretch reads APVEKQVAGKPFQLVKNPHYQANATRAIFRAEKKYARHTAIPEQGKTIVKSA. The Peptidase A1 domain occupies 89–391; sequence YYATVSVGTP…NQGVPEVQIA (303 aa). Aspartate 107 is a catalytic residue. Cysteine 120 and cysteine 123 form a disulfide bridge. Residue aspartate 288 is part of the active site. The cysteines at positions 322 and 355 are disulfide-linked.

It belongs to the peptidase A1 family. Monomer.

In terms of biological role, hydrolysis of proteins with a broad specificity. Residues recognized to be cleaved were primarily those of trypsin and chymotrypsin and Lys was the most susceptible. The chain is Syncephapepsin (SPSR) from Syncephalastrum racemosum (Filamentous fungus).